We begin with the raw amino-acid sequence, 67 residues long: Small ribosomal subunit protein bS21 (67 aa).

The protein belongs to the bacterial ribosomal protein bS21 family.

In Rhodospirillum centenum (strain ATCC 51521 / SW), this protein is Small ribosomal subunit protein bS21.